A 159-amino-acid polypeptide reads, in one-letter code: ATP synthase subunit b' (159 aa).

A helical transmembrane segment spans residues 27-47; that stretch reads ATLPLMAVQFLILTVILNALL.

Belongs to the ATPase B chain family. In terms of assembly, F-type ATPases have 2 components, F(1) - the catalytic core - and F(0) - the membrane proton channel. F(1) has five subunits: alpha(3), beta(3), gamma(1), delta(1), epsilon(1). F(0) has four main subunits: a(1), b(1), b'(1) and c(10-14). The alpha and beta chains form an alternating ring which encloses part of the gamma chain. F(1) is attached to F(0) by a central stalk formed by the gamma and epsilon chains, while a peripheral stalk is formed by the delta, b and b' chains.

The protein localises to the cellular thylakoid membrane. Functionally, f(1)F(0) ATP synthase produces ATP from ADP in the presence of a proton or sodium gradient. F-type ATPases consist of two structural domains, F(1) containing the extramembraneous catalytic core and F(0) containing the membrane proton channel, linked together by a central stalk and a peripheral stalk. During catalysis, ATP synthesis in the catalytic domain of F(1) is coupled via a rotary mechanism of the central stalk subunits to proton translocation. In terms of biological role, component of the F(0) channel, it forms part of the peripheral stalk, linking F(1) to F(0). The b'-subunit is a diverged and duplicated form of b found in plants and photosynthetic bacteria. This chain is ATP synthase subunit b', found in Synechococcus sp. (strain PCC 6716).